Here is a 92-residue protein sequence, read N- to C-terminus: N(2)-fixation sustaining protein CowN (92 aa).

Belongs to the CowN family.

Is required to sustain N(2)-dependent growth in the presence of low levels of carbon monoxide (CO). Probably acts by protecting the N(2) fixation ability of the nitrogenase complex, which is inactivated in the presence of CO. This chain is N(2)-fixation sustaining protein CowN, found in Rhodopseudomonas palustris (strain BisA53).